Here is a 122-residue protein sequence, read N- to C-terminus: Large ribosomal subunit protein uL14c (122 aa).

The protein belongs to the universal ribosomal protein uL14 family. In terms of assembly, part of the 50S ribosomal subunit.

Its subcellular location is the plastid. The protein resides in the chloroplast. Binds to 23S rRNA. The sequence is that of Large ribosomal subunit protein uL14c from Arabis hirsuta (Hairy rock-cress).